A 126-amino-acid polypeptide reads, in one-letter code: Protein ApaG (126 aa).

The ApaG domain occupies 2 to 126; the sequence is SALDDSIRVE…FRLALPGLLH (125 aa).

In Shewanella sp. (strain ANA-3), this protein is Protein ApaG.